An 820-amino-acid chain; its full sequence is Leucine--tRNA ligase (820 aa).

The 'HIGH' region signature appears at 42–52 (PYPSGDLHMGH). Residues 576–580 (KMSKS) carry the 'KMSKS' region motif. ATP is bound at residue K579.

The protein belongs to the class-I aminoacyl-tRNA synthetase family.

The protein localises to the cytoplasm. It catalyses the reaction tRNA(Leu) + L-leucine + ATP = L-leucyl-tRNA(Leu) + AMP + diphosphate. The protein is Leucine--tRNA ligase of Coxiella burnetii (strain RSA 493 / Nine Mile phase I).